Consider the following 296-residue polypeptide: Heme oxygenase 1 (296 aa).

The Cytoplasmic segment spans residues 1–273 (METSQPHNAE…RMQADMLTTS (273 aa)). Heme b-binding residues include Lys21, His28, Tyr137, and Arg186. The segment at 231 to 264 (GHAVQPKAELRTRSVNKSHENSPAAGKESERTSR) is disordered. The segment covering 238 to 250 (AELRTRSVNKSHE) has biased composition (basic and acidic residues). Residues 274 to 296 (PLVRWLLALGFIATTVAVGLFAM) traverse the membrane as a helical; Anchor for type IV membrane protein segment.

It belongs to the heme oxygenase family. Homodimer and higher order homooligomer. Oligomerization is crucial for its stability and function in the endoplasmic reticulum. In terms of processing, a soluble form arises by proteolytic removal of the membrane anchor.

Its subcellular location is the endoplasmic reticulum membrane. It carries out the reaction heme b + 3 reduced [NADPH--hemoprotein reductase] + 3 O2 = biliverdin IXalpha + CO + Fe(2+) + 3 oxidized [NADPH--hemoprotein reductase] + 3 H2O + H(+). With respect to regulation, inhibited by metalloporphyrins in the following order of decreasing potency: tin mesoporphyrin &gt; tin protoporphyrin &gt; zinc protoporphyrin &gt; manganese protoporphyrin &gt; cobalt protoporphyrin. Functionally, catalyzes the oxidative cleavage of heme at the alpha-methene bridge carbon, released as carbon monoxide (CO), to generate biliverdin IXalpha, while releasing the central heme iron chelate as ferrous iron. Affords protection against programmed cell death and this cytoprotective effect relies on its ability to catabolize free heme and prevent it from sensitizing cells to undergo apoptosis. Its function is as follows. Catalyzes the oxidative cleavage of heme at the alpha-methene bridge carbon, released as carbon monoxide (CO), to generate biliverdin IXalpha, while releasing the central heme iron chelate as ferrous iron. This is Heme oxygenase 1 (HMOX1) from Gallus gallus (Chicken).